Consider the following 428-residue polypeptide: GTPase Obg (428 aa).

Residues 1 to 158 (MFIDIAKVFI…LSIVLELKLL (158 aa)) form the Obg domain. The region spanning 159 to 331 (ADVGLLGFPN…VIKEAARMLK (173 aa)) is the OBG-type G domain. Residues 165-172 (GFPNVGKS), 190-194 (FTTLK), 212-215 (DIPG), 282-285 (NKSD), and 312-314 (SAA) contribute to the GTP site. Residues Ser-172 and Thr-192 each contribute to the Mg(2+) site. Residues 345-428 (MYIPEEKKFT…LNDFEFEYLL (84 aa)) enclose the OCT domain.

It belongs to the TRAFAC class OBG-HflX-like GTPase superfamily. OBG GTPase family. Monomer. Mg(2+) is required as a cofactor.

It localises to the cytoplasm. Functionally, an essential GTPase which binds GTP, GDP and possibly (p)ppGpp with moderate affinity, with high nucleotide exchange rates and a fairly low GTP hydrolysis rate. Plays a role in control of the cell cycle, stress response, ribosome biogenesis and in those bacteria that undergo differentiation, in morphogenesis control. The chain is GTPase Obg from Clostridium botulinum (strain Alaska E43 / Type E3).